A 548-amino-acid polypeptide reads, in one-letter code: Glutamate--tRNA ligase (548 aa).

A 'HIGH' region motif is present at residues 102–112 (PSPSGPLHIGH).

Belongs to the class-I aminoacyl-tRNA synthetase family. Glutamate--tRNA ligase type 2 subfamily.

It localises to the cytoplasm. The catalysed reaction is tRNA(Glu) + L-glutamate + ATP = L-glutamyl-tRNA(Glu) + AMP + diphosphate. Its function is as follows. Catalyzes the attachment of glutamate to tRNA(Glu) in a two-step reaction: glutamate is first activated by ATP to form Glu-AMP and then transferred to the acceptor end of tRNA(Glu). The polypeptide is Glutamate--tRNA ligase (Thermoplasma volcanium (strain ATCC 51530 / DSM 4299 / JCM 9571 / NBRC 15438 / GSS1)).